The primary structure comprises 110 residues: UPF0060 membrane protein Veis_0342 (110 aa).

Helical transmembrane passes span 8 to 28 (VLFTITAVVEIVGCYLPWLVI), 33 to 53 (PLWLLLPAALSLALFAWLLTL), 63 to 83 (AAYGGIYIAVALAWLHWVDGV), and 90 to 110 (VAGATVAMVGMLIIMLQPASA).

This sequence belongs to the UPF0060 family.

Its subcellular location is the cell inner membrane. This Verminephrobacter eiseniae (strain EF01-2) protein is UPF0060 membrane protein Veis_0342.